A 345-amino-acid chain; its full sequence is sn-glycerol-3-phosphate import ATP-binding protein UgpC (345 aa).

The 232-residue stretch at 4–235 (IQLLNIKKQY…PKTIFVADFI (232 aa)) folds into the ABC transporter domain. 37 to 44 (GPSGCGKS) lines the ATP pocket.

The protein belongs to the ABC transporter superfamily. sn-glycerol-3-phosphate importer (TC 3.A.1.1.3) family. In terms of assembly, the complex is composed of two ATP-binding proteins (UgpC), two transmembrane proteins (UgpA and UgpE) and a solute-binding protein (UgpB).

The protein localises to the cell inner membrane. It carries out the reaction sn-glycerol 3-phosphate(out) + ATP + H2O = sn-glycerol 3-phosphate(in) + ADP + phosphate + H(+). Its function is as follows. Part of the ABC transporter complex UgpBAEC involved in sn-glycerol-3-phosphate (G3P) import. Responsible for energy coupling to the transport system. In Bartonella bacilliformis (strain ATCC 35685 / KC583 / Herrer 020/F12,63), this protein is sn-glycerol-3-phosphate import ATP-binding protein UgpC.